We begin with the raw amino-acid sequence, 309 residues long: Nucleotide-binding protein cgR_1639 (309 aa).

32-39 (GMSGAGLS) serves as a coordination point for ATP. 83-86 (DVRS) is a GTP binding site.

The protein belongs to the RapZ-like family.

Its function is as follows. Displays ATPase and GTPase activities. This chain is Nucleotide-binding protein cgR_1639, found in Corynebacterium glutamicum (strain R).